Here is a 1235-residue protein sequence, read N- to C-terminus: Bromodomain-containing protein 8 (1235 aa).

The residue at position 85 (Lys85) is an N6-acetyllysine. Residues 97 to 171 adopt a coiled-coil conformation; sequence VRKLTAERVE…ATDAAYQARQ (75 aa). Arg124 carries the phosphothreonine modification. Leu128 and Asp144 each carry phosphoserine. Residues 186–205 are disordered; the sequence is RSPIDSASPGGDYPLGDLTP. The residue at position 264 (Ala264) is a Phosphothreonine. Phosphoserine is present on residues Ser268, Ser284, Ser383, and Ser387. Residue Lys469 forms a Glycyl lysine isopeptide (Lys-Gly) (interchain with G-Cter in SUMO2) linkage. Lys481 bears the N6-acetyllysine; alternate mark. A Glycyl lysine isopeptide (Lys-Gly) (interchain with G-Cter in SUMO1); alternate cross-link involves residue Lys481. A Glycyl lysine isopeptide (Lys-Gly) (interchain with G-Cter in SUMO2); alternate cross-link involves residue Lys481. Residues Lys509 and Lys575 each participate in a glycyl lysine isopeptide (Lys-Gly) (interchain with G-Cter in SUMO2) cross-link. A disordered region spans residues 551-597; it reads TAAGEIVEADVAIGKGDETPLTNVKTEASPESMLSPSHGSNPIEDPL. Ser579 bears the Phosphoserine mark. Lys612 is covalently cross-linked (Glycyl lysine isopeptide (Lys-Gly) (interchain with G-Cter in SUMO2)). A phosphoserine mark is found at Ser621, Ser637, and Ser641. Positions 621–672 are disordered; it reads SQIKDAPGEDEEEDGVSEAASLEEPKEEDQGEGYLSEMDNEPPVSESDDGFS. The Bromo 1 domain maps to 706–811; sequence IQAQKIWKKA…RDVLEQIQQF (106 aa). Disordered stretches follow at residues 827–848, 903–940, and 966–999; these read AKSL…DSVP, ETED…AARK, and ESSE…ETEE. Residues 831–846 show a composition bias toward basic and acidic residues; it reads RGRDSTRKQDASEKDS. The segment covering 905–915 has biased composition (acidic residues); that stretch reads EDPEAEELEES. Leu924 carries the phosphoserine modification. Residues 979–999 are compositionally biased toward basic and acidic residues; it reads QEGREIKASEGERELCRETEE. A Bromo 2 domain is found at 1099–1207; it reads DDPVQDHLLF…QEVLEQIQVL (109 aa).

Component of the NuA4 histone acetyltransferase complex which contains the catalytic subunit KAT5/TIP60 and the subunits EP400, TRRAP/PAF400, BRD8/SMAP, EPC1, DMAP1/DNMAP1, RUVBL1/TIP49, RUVBL2, ING3, actin, ACTL6A/BAF53A, MORF4L1/MRG15, MORF4L2/MRGX, MRGBP, YEATS4/GAS41, VPS72/YL1 and MEAF6. The NuA4 complex interacts with MYC and the adenovirus E1A protein. Component of a NuA4-related complex which contains EP400, TRRAP/PAF400, SRCAP, BRD8/SMAP, EPC1, DMAP1/DNMAP1, RUVBL1/TIP49, RUVBL2, actin, ACTL6A/BAF53A, VPS72 and YEATS4/GAS41. BRD8 isoform 2 interacts with RXRA/NR2B1 and THRB/ERBA2. Component of a SWR1-like complex. As to expression, expressed in adipose tissue, brain, heart, kidney, liver, lung, pancreas, placenta and skeletal muscle.

It localises to the nucleus. Its function is as follows. May act as a coactivator during transcriptional activation by hormone-activated nuclear receptors (NR). Isoform 2 stimulates transcriptional activation by AR/DHTR, ESR1/NR3A1, RXRA/NR2B1 and THRB/ERBA2. At least isoform 1 and isoform 2 are components of the NuA4 histone acetyltransferase (HAT) complex which is involved in transcriptional activation of select genes principally by acetylation of nucleosomal histones H4 and H2A. This modification may both alter nucleosome - DNA interactions and promote interaction of the modified histones with other proteins which positively regulate transcription. This complex may be required for the activation of transcriptional programs associated with oncogene and proto-oncogene mediated growth induction, tumor suppressor mediated growth arrest and replicative senescence, apoptosis, and DNA repair. NuA4 may also play a direct role in DNA repair when recruited to sites of DNA damage. Component of a SWR1-like complex that specifically mediates the removal of histone H2A.Z/H2AZ1 from the nucleosome. The sequence is that of Bromodomain-containing protein 8 (BRD8) from Homo sapiens (Human).